A 132-amino-acid polypeptide reads, in one-letter code: Fatty acid-binding protein, liver (132 aa).

Position 1 is an N-acetylvaline (valine 1). At tyrosine 19 the chain carries Phosphotyrosine; by Tyr-kinases.

Belongs to the calycin superfamily. Fatty-acid binding protein (FABP) family.

It localises to the cytoplasm. Its function is as follows. FABPs are thought to play a role in the intracellular transport of long-chain fatty acids and their acyl-CoA esters. The protein is Fatty acid-binding protein, liver of Ginglymostoma cirratum (Nurse shark).